The chain runs to 417 residues: D-amino acid dehydrogenase (417 aa).

FAD is bound at residue 3–17; the sequence is IVVLGGGVVGVTSAW.

It belongs to the DadA oxidoreductase family. Requires FAD as cofactor.

It carries out the reaction a D-alpha-amino acid + A + H2O = a 2-oxocarboxylate + AH2 + NH4(+). Its pathway is amino-acid degradation; D-alanine degradation; NH(3) and pyruvate from D-alanine: step 1/1. Oxidative deamination of D-amino acids. In Aeromonas hydrophila subsp. hydrophila (strain ATCC 7966 / DSM 30187 / BCRC 13018 / CCUG 14551 / JCM 1027 / KCTC 2358 / NCIMB 9240 / NCTC 8049), this protein is D-amino acid dehydrogenase.